The primary structure comprises 156 residues: Large ribosomal subunit protein uL15 (156 aa).

Residues 25–48 (RGIGCGKGKTSGRGHKGQKARSGV) are disordered. The segment covering 34 to 43 (TSGRGHKGQK) has biased composition (basic residues).

This sequence belongs to the universal ribosomal protein uL15 family. In terms of assembly, part of the 50S ribosomal subunit.

Binds to the 23S rRNA. The protein is Large ribosomal subunit protein uL15 of Wolbachia pipientis wMel.